A 574-amino-acid polypeptide reads, in one-letter code: Proline--tRNA ligase (574 aa).

The protein belongs to the class-II aminoacyl-tRNA synthetase family. ProS type 1 subfamily. In terms of assembly, homodimer.

It localises to the cytoplasm. The catalysed reaction is tRNA(Pro) + L-proline + ATP = L-prolyl-tRNA(Pro) + AMP + diphosphate. Functionally, catalyzes the attachment of proline to tRNA(Pro) in a two-step reaction: proline is first activated by ATP to form Pro-AMP and then transferred to the acceptor end of tRNA(Pro). As ProRS can inadvertently accommodate and process non-cognate amino acids such as alanine and cysteine, to avoid such errors it has two additional distinct editing activities against alanine. One activity is designated as 'pretransfer' editing and involves the tRNA(Pro)-independent hydrolysis of activated Ala-AMP. The other activity is designated 'posttransfer' editing and involves deacylation of mischarged Ala-tRNA(Pro). The misacylated Cys-tRNA(Pro) is not edited by ProRS. The sequence is that of Proline--tRNA ligase from Buchnera aphidicola subsp. Baizongia pistaciae (strain Bp).